Reading from the N-terminus, the 874-residue chain is MKSAEIREAFLRFFEEKGHTRVASSSLIPANDPTLLFTNAGMNQFKDCFLGLEKRAYTRATTSQKCVRAGGKHNDLENVGYTARHHTFFEMLGNFSFGDYFKRDAIHYAWEFLTGEKWLNLPKEKLWVTVYATDDEAYDIWTKEVGVPAERMVRIGDNKGAPYASDNFWAMGDTGPCGPCTEIFFDHGPEIWGGPPGSPEEDGDRYIEIWNNVFMQFNRTADGVMHPLPAPSVDTGMGLERVSAVLQHVHSNYEIDLFQNLLKASAEAIGCANDDAPSLKVVADHIRSCSFLIADGVLPSNEGRGYVLRRIIRRACRHGNKLGARGTFFHKIVAALVAEMGDAFPELKQQQAHIERVLKTEEEQFAKTLEQGLKILEQDLAELQGSVIPGNVVFKLYDTYGFPVDLTNDIARERELTIDEDGFEREMEAQRERARASSAFGMDYNSLVKVDGETRFLGYQGVSGAGQIVALFRDGQAVERLEEGEEGVVVLDQTPFYAESGGQVGDSGYLEAAGVRFDVRDTTKAGGAHLHHGVVARGNLSVGGAVKAEVDASVRQATALNHSATHLLHAALRQVLGDHVQQKGSLVDSQRLRFDFSHFEAIKAEQLKALEDIVNAEIRRNTEVETEETDIDTAKAKGAMALFGEKYGDQVRVLSMGGDFSVELCGGTHVSRTGDIGLFKITSEGGVAAGVRRIEAVTGAAALAYLNGAEEQLKEAASLVKGSRDNLLDKLGALLERNRSLEKELEQLKAKAASAAGDDLSAAAVEIKGAKVLAARLDGLDGKALLALVDQLKNKLGRAVILLGGELDGKVVLVAGVTQDLTGQLKAGELMKQAAAAVGGKGGGRPDMAQGGGTDAAKLDEALALAQRFVEQGL.

Residues His-562, His-566, Cys-665, and His-669 each coordinate Zn(2+).

Belongs to the class-II aminoacyl-tRNA synthetase family. Zn(2+) is required as a cofactor.

It is found in the cytoplasm. The catalysed reaction is tRNA(Ala) + L-alanine + ATP = L-alanyl-tRNA(Ala) + AMP + diphosphate. In terms of biological role, catalyzes the attachment of alanine to tRNA(Ala) in a two-step reaction: alanine is first activated by ATP to form Ala-AMP and then transferred to the acceptor end of tRNA(Ala). Also edits incorrectly charged Ser-tRNA(Ala) and Gly-tRNA(Ala) via its editing domain. This Pseudomonas aeruginosa (strain ATCC 15692 / DSM 22644 / CIP 104116 / JCM 14847 / LMG 12228 / 1C / PRS 101 / PAO1) protein is Alanine--tRNA ligase.